A 124-amino-acid chain; its full sequence is Holo-[acyl-carrier-protein] synthase (124 aa).

Residues Asp5 and Glu51 each contribute to the Mg(2+) site.

Belongs to the P-Pant transferase superfamily. AcpS family. Mg(2+) serves as cofactor.

Its subcellular location is the cytoplasm. The enzyme catalyses apo-[ACP] + CoA = holo-[ACP] + adenosine 3',5'-bisphosphate + H(+). Transfers the 4'-phosphopantetheine moiety from coenzyme A to a Ser of acyl-carrier-protein. The polypeptide is Holo-[acyl-carrier-protein] synthase (Hydrogenobaculum sp. (strain Y04AAS1)).